The sequence spans 180 residues: Segregation and condensation protein B (180 aa).

Belongs to the ScpB family. In terms of assembly, homodimer. Homodimerization may be required to stabilize the binding of ScpA to the Smc head domains. Component of a cohesin-like complex composed of ScpA, ScpB and the Smc homodimer, in which ScpA and ScpB bind to the head domain of Smc. The presence of the three proteins is required for the association of the complex with DNA.

It localises to the cytoplasm. In terms of biological role, participates in chromosomal partition during cell division. May act via the formation of a condensin-like complex containing Smc and ScpA that pull DNA away from mid-cell into both cell halves. This chain is Segregation and condensation protein B, found in Staphylococcus aureus (strain Mu3 / ATCC 700698).